The sequence spans 57 residues: Large ribosomal subunit protein bL32 (57 aa).

A disordered region spans residues 1 to 23 (MAVPKKRTSKTRTNRRRAQKKAR).

Belongs to the bacterial ribosomal protein bL32 family.

The polypeptide is Large ribosomal subunit protein bL32 (Natranaerobius thermophilus (strain ATCC BAA-1301 / DSM 18059 / JW/NM-WN-LF)).